The following is a 266-amino-acid chain: Protein SCO2 homolog, mitochondrial (266 aa).

The N-terminal 41 residues, 1–41, are a transit peptide targeting the mitochondrion; that stretch reads MLLLTRSPTAWHRLSQLKPRVLPGTLGGQALHLRSWLLSRQ. Over 42–60 the chain is Mitochondrial matrix; it reads GPAETGGQGQPQGPGLRTR. A helical membrane pass occupies residues 61–78; sequence LLITGLFGAGLGGAWLAL. The Mitochondrial intermembrane portion of the chain corresponds to 79-266; it reads RAEKERLQQQ…HMAAFRSVLS (188 aa). In terms of domain architecture, Thioredoxin spans 85–259; that stretch reads LQQQKRTEAL…ISDSVRRHMA (175 aa). Cu cation-binding residues include cysteine 133, cysteine 137, and histidine 224. Residues cysteine 133 and cysteine 137 are joined by a disulfide bond.

It belongs to the SCO1/2 family. Homodimer. Interacts with COA6. Found in a complex with TMEM177, COX20, COA6, MT-CO2/COX2, COX18 and SCO1. Interacts with TMEM177 in a COX20-dependent manner. Interacts with COX20 in a MT-CO2/COX2- and COX18-dependent manner. Interacts with COX16. As to expression, ubiquitous.

The protein resides in the mitochondrion inner membrane. Functionally, copper metallochaperone essential for the synthesis and maturation of cytochrome c oxidase subunit II (MT-CO2/COX2) by facilitating the incorporation of copper into the Cu(A) site of MT-CO2/COX2. Could also act as a thiol-disulfide oxidoreductase to regulate the redox state of the cysteines in SCO1 during maturation of MT-CO2/COX2. The polypeptide is Protein SCO2 homolog, mitochondrial (SCO2) (Homo sapiens (Human)).